The following is a 172-amino-acid chain: NADH dehydrogenase [ubiquinone] 1 alpha subcomplex subunit 8 (172 aa).

2 consecutive CHCH domains span residues 33–74 and 75–118; these read GAQC…FRQI and KRHC…LGWV. Short sequence motifs (cx9C motif) lie at residues 36 to 46, 56 to 66, 78 to 88, and 100 to 110; these read CDKPNKEFMLC, CLEEGKLVNKC, CAEPFTEYWTC, and CRKQQAKFDEC. Disulfide bonds link C36–C66, C46–C56, C78–C110, and C88–C100. The disordered stretch occupies residues 133–164; the sequence is TDRPLPENPYHSRPRPDPSPEIEGDLQPATHG.

Belongs to the complex I NDUFA8 subunit family. In terms of assembly, complex I is composed of 45 different subunits. Post-translationally, may contain intrachain disulfide bonds, as evidenced by its electrophoretic mobility under reducing vs non-reducing conditions.

Its subcellular location is the mitochondrion inner membrane. The protein localises to the mitochondrion intermembrane space. The protein resides in the mitochondrion. Functionally, accessory subunit of the mitochondrial membrane respiratory chain NADH dehydrogenase (Complex I), that is believed not to be involved in catalysis. Complex I functions in the transfer of electrons from NADH to the respiratory chain. The immediate electron acceptor for the enzyme is believed to be ubiquinone. This Homo sapiens (Human) protein is NADH dehydrogenase [ubiquinone] 1 alpha subcomplex subunit 8 (NDUFA8).